The sequence spans 58 residues: UPF0391 membrane protein Bxeno_A2959 (58 aa).

2 helical membrane passes run 4-24 (WALF…TGVA) and 33-53 (FLFI…FVVT).

This sequence belongs to the UPF0391 family.

The protein resides in the cell membrane. In Paraburkholderia xenovorans (strain LB400), this protein is UPF0391 membrane protein Bxeno_A2959.